We begin with the raw amino-acid sequence, 393 residues long: Protein phosphatase 2C homolog 4 (393 aa).

The 336-residue stretch at tyrosine 33 to leucine 368 folds into the PPM-type phosphatase domain. Mn(2+) contacts are provided by aspartate 83, glycine 84, aspartate 310, and aspartate 359.

The protein belongs to the PP2C family. Mg(2+) is required as a cofactor. It depends on Mn(2+) as a cofactor.

It catalyses the reaction O-phospho-L-seryl-[protein] + H2O = L-seryl-[protein] + phosphate. The enzyme catalyses O-phospho-L-threonyl-[protein] + H2O = L-threonyl-[protein] + phosphate. The sequence is that of Protein phosphatase 2C homolog 4 (PTC4) from Saccharomyces cerevisiae (strain ATCC 204508 / S288c) (Baker's yeast).